A 389-amino-acid chain; its full sequence is MDSLGTAATQFLFDLFKELNKTNDGNVFFSPVGISTAIGMIILGTRGATASELQKVLYTEQGTESSRIKSEEEEIEKREEIHHQLQMLLTEISKFSNDYDLIISNRLFGEKTYLFLQKYIDYVEKYYHASLEPVDFVNAADESRKKINSWVESQTNVKVKDLFPEGSLNSSTKLVLINTVYFKGLWDREFKKEHTKEEDFWLNKNLSKPVQMMALCSSFNFTFLEDLQAKIVGIPYKNNDISMFVLLPNDIDGLEKIMDKMSPEKLVEWTSPGHLEQRRVDLRLPRLQVEETYDLEPVLEAVGIHSAFSEHADYSGMSARSGLHAQNFLHRSFLVVTEEGVEATAGTGVGLKVSSAASCELVHCNHPFLFFIRHRESDSILFFGKFSSP.

It belongs to the serpin family. Ov-serpin subfamily.

It is found in the cytoplasm. Its function is as follows. May play a role in the proliferation or differentiation of keratinocytes. The protein is Serpin B13 (Serpinb13) of Mus musculus (Mouse).